We begin with the raw amino-acid sequence, 79 residues long: CDC42 small effector protein 1 (79 aa).

2 S-palmitoyl cysteine lipidation sites follow: Cys-10 and Cys-11. The 14-residue stretch at Ile-30 to Gly-43 folds into the CRIB domain. The disordered stretch occupies residues Gly-48 to Leu-79. The span at Met-63 to Pro-72 shows a compositional bias: basic and acidic residues.

The protein belongs to the CDC42SE/SPEC family. As to quaternary structure, interacts with CDC42 (in GTP-bound form). Interacts weakly with RAC1 and not at all with RHOA.

The protein localises to the cytoplasm. The protein resides in the cytoskeleton. Its subcellular location is the cell membrane. In terms of biological role, probably involved in the organization of the actin cytoskeleton by acting downstream of CDC42, inducing actin filament assembly. Alters CDC42-induced cell shape changes. In activated T-cells, may play a role in CDC42-mediated F-actin accumulation at the immunological synapse. May play a role in early contractile events in phagocytosis in macrophages. The sequence is that of CDC42 small effector protein 1 (CDC42SE1) from Pongo abelii (Sumatran orangutan).